The sequence spans 466 residues: 3-isopropylmalate dehydratase large subunit (466 aa).

Residues C347, C407, and C410 each contribute to the [4Fe-4S] cluster site.

This sequence belongs to the aconitase/IPM isomerase family. LeuC type 1 subfamily. In terms of assembly, heterodimer of LeuC and LeuD. [4Fe-4S] cluster is required as a cofactor.

It catalyses the reaction (2R,3S)-3-isopropylmalate = (2S)-2-isopropylmalate. It participates in amino-acid biosynthesis; L-leucine biosynthesis; L-leucine from 3-methyl-2-oxobutanoate: step 2/4. Functionally, catalyzes the isomerization between 2-isopropylmalate and 3-isopropylmalate, via the formation of 2-isopropylmaleate. The protein is 3-isopropylmalate dehydratase large subunit of Solibacter usitatus (strain Ellin6076).